A 252-amino-acid chain; its full sequence is tRNA (guanine-N(1)-)-methyltransferase (252 aa).

Residues G118 and I138 to L143 each bind S-adenosyl-L-methionine.

Belongs to the RNA methyltransferase TrmD family. As to quaternary structure, homodimer.

It is found in the cytoplasm. The catalysed reaction is guanosine(37) in tRNA + S-adenosyl-L-methionine = N(1)-methylguanosine(37) in tRNA + S-adenosyl-L-homocysteine + H(+). In terms of biological role, specifically methylates guanosine-37 in various tRNAs. The protein is tRNA (guanine-N(1)-)-methyltransferase of Pseudomonas paraeruginosa (strain DSM 24068 / PA7) (Pseudomonas aeruginosa (strain PA7)).